The chain runs to 598 residues: Elongation factor 4 (598 aa).

Positions 2–184 constitute a tr-type G domain; that stretch reads NRIRNFSIIA…TIVAKLPPPK (183 aa). GTP is bound by residues 14-19 and 131-134; these read DHGKST and NKID.

This sequence belongs to the TRAFAC class translation factor GTPase superfamily. Classic translation factor GTPase family. LepA subfamily.

Its subcellular location is the cell inner membrane. It catalyses the reaction GTP + H2O = GDP + phosphate + H(+). Required for accurate and efficient protein synthesis under certain stress conditions. May act as a fidelity factor of the translation reaction, by catalyzing a one-codon backward translocation of tRNAs on improperly translocated ribosomes. Back-translocation proceeds from a post-translocation (POST) complex to a pre-translocation (PRE) complex, thus giving elongation factor G a second chance to translocate the tRNAs correctly. Binds to ribosomes in a GTP-dependent manner. The chain is Elongation factor 4 from Desulfosudis oleivorans (strain DSM 6200 / JCM 39069 / Hxd3) (Desulfococcus oleovorans).